We begin with the raw amino-acid sequence, 338 residues long: Tryptophan--tRNA ligase (338 aa).

Residues 18 to 20 (QPS) and 26 to 27 (GN) each bind ATP. Residues 19–27 (PSGNLTIGN) carry the 'HIGH' region motif. Residue Asp142 participates in L-tryptophan binding. Residues 154-156 (GND), Ile193, and 202-206 (KMSKS) each bind ATP. A 'KMSKS' region motif is present at residues 202 to 206 (KMSKS).

It belongs to the class-I aminoacyl-tRNA synthetase family. Homodimer.

The protein localises to the cytoplasm. The catalysed reaction is tRNA(Trp) + L-tryptophan + ATP = L-tryptophyl-tRNA(Trp) + AMP + diphosphate + H(+). Catalyzes the attachment of tryptophan to tRNA(Trp). The polypeptide is Tryptophan--tRNA ligase (Clostridium tetani (strain Massachusetts / E88)).